A 406-amino-acid chain; its full sequence is Phloroisovalerophenone synthase (406 aa).

The active site involves C171.

The protein belongs to the thiolase-like superfamily. Chalcone/stilbene synthases family.

It catalyses the reaction 3-methylbutanoyl-CoA + 3 malonyl-CoA + 3 H(+) = phlorisovalerophenone + 3 CO2 + 4 CoA. In terms of biological role, produces 3-methyl-1-(2,4,6-trihydroxyphenyl)butan-1-one (phloroisovalerophenone). The polypeptide is Phloroisovalerophenone synthase (VPS) (Psilotum nudum (Whisk fern)).